The following is a 1088-amino-acid chain: Ran-binding protein 17 (1088 aa).

The residue at position 2 (alanine 2) is an N-acetylalanine. The residue at position 569 (serine 569) is a Phosphoserine.

It belongs to the exportin family. As to quaternary structure, binds to nucleoporins and the GTP-bound form of Ran. As to expression, highly expressed in primary spermatocytes and very weakly in pancreas.

The protein localises to the cytoplasm. The protein resides in the nucleus. Its subcellular location is the nuclear pore complex. May function as a nuclear transport receptor. The chain is Ran-binding protein 17 (Ranbp17) from Mus musculus (Mouse).